A 4128-amino-acid chain; its full sequence is DNA-dependent protein kinase catalytic subunit (4128 aa).

Lys-117 carries the post-translational modification N6-acetyllysine. The HEAT 1 repeat unit spans residues 288-323; that stretch reads DNYVSLFEVLLKWCAHTNVELKKAALSALESFLKQV. 2 positions are modified to phosphoserine: Ser-511 and Ser-687. At Lys-828 the chain carries N6-acetyllysine. 2 positions are modified to phosphoserine: Ser-841 and Ser-893. One copy of the HEAT 2 repeat lies at 1004–1040; sequence QDTVALLEAILDGIVDPVDSTLRDFCGRCIREFLKWS. Phosphoserine is present on Ser-1065. An N6-acetyllysine modification is found at Lys-1209. Residues 1503-1538 are interaction with C1D; sequence LDLSCKQLASGLLELAFAFGGLCERLVSLLLNPAVL. Positions 1503 to 1538 are leucine-zipper; sequence LDLSCKQLASGLLELAFAFGGLCERLVSLLLNPAVL. Residues 1723 to 1756 form a TPR 1 repeat; it reads PMQSREFPPGTPRFNNYVDCMKKFLDALELSQSP. Lys-1970 is modified (N6-acetyllysine). A disordered region spans residues 2050–2073; sequence QSYSYSSQDPRPATGRFRRREQRD. Ser-2056 is subject to Phosphoserine; by autocatalysis. Lys-2259 carries the post-translational modification N6-acetyllysine. The KIP-binding stretch occupies residues 2436-3212; sequence LDIIYKMMPK…DNSMNVDQDG (777 aa). At Thr-2535 the chain carries Phosphothreonine. A Phosphothreonine; by autocatalysis modification is found at Thr-2609. Position 2612 is a phosphoserine; by autocatalysis (Ser-2612). Residues Thr-2638 and Thr-2647 each carry the phosphothreonine; by autocatalysis modification. Residues 2737 to 2765 form a may split the end of the DNA molecule, with the two strands separating around the region region; it reads EKLSLMYARKGVAEQKREKEIKSELKMKQ. Ser-2789 carries the post-translational modification Phosphoserine. Residues 2906 to 3539 form the FAT domain; that stretch reads PAKRVRGKAR…VYPFIISSES (634 aa). TPR repeat units follow at residues 2920-2948 and 2949-2982; these read VLRWVELAKLYRSIGEYDVLRGIFTSEIG and TKQITQSALLAEARSDYSEAAKQYDEALNKQDWV. Positions 3200–3222 are disordered; it reads LPEDNSMNVDQDGDPSDRMEVQE. Ser-3205 is subject to Phosphoserine. An N6-acetyllysine mark is found at Lys-3241, Lys-3260, Lys-3621, Lys-3638, and Lys-3642. Residues 3722–4053 enclose the PI3K/PI4K catalytic domain; it reads FDERVTVMAS…ICYAKRKLAG (332 aa). The tract at residues 3728-3734 is G-loop; it reads VMASLRR. A phosphoserine mark is found at Ser-3731 and Ser-3821. Positions 3919–3927 are catalytic loop; the sequence is GIGDRHLNN. The tract at residues 3939–3964 is activation loop; that stretch reads GIDFGHAFGSATQFLPVPELMPFRLT. Ser-4026 carries the phosphoserine modification. Positions 4096–4128 constitute an FATC domain; sequence SGLSEETQVKCLMDQATDPNILGRTWEGWEPWM.

Belongs to the PI3/PI4-kinase family. DNA-PK is a heterotrimer of PRKDC and the Ku dimer (composed of XRCC6/Ku70 and XRCC5/Ku86). Formation of this complex may be promoted by interaction with ILF3. Component of the core long-range non-homologous end joining (NHEJ) complex (also named DNA-PK complex) composed of PRKDC, LIG4, XRCC4, XRCC6/Ku70, XRCC5/Ku86 and NHEJ1/XLF. Additional component of the NHEJ complex includes PAXX. Following autophosphorylation, PRKDC dissociates from DNA. Interacts with DNA-PKcs-interacting protein (KIP) with the region upstream the kinase domain. PRKDC alone also interacts with and phosphorylates DCLRE1C, thereby activating the latent endonuclease activity of this protein. Interacts with C1D. Interacts with TTI1 and TELO2. Interacts with CIB1. Interacts with SETX. Interacts with NR4A3; the DNA-dependent protein kinase complex DNA-PK phosphorylates and activates NR4A3 and prevents NR4A3 ubiquitination and degradation. Interacts with BRAT1. Part of the HDP-RNP complex composed of at least HEXIM1, PRKDC, XRCC5, XRCC6, paraspeckle proteins (SFPQ, NONO, PSPC1, RBM14, and MATR3) and NEAT1 RNA. Interacts with KAT5. In terms of processing, autophosphorylated at two clusters, the T2609 cluster and the S2056 cluster. Autophosphorylated on Ser-2056, Thr-2609, Thr-2638 and Thr-2647. Ser-2056 and Thr-2609 are DNA damage-inducible phosphorylation sites (inducible with ionizing radiation, IR) dephosphorylated by PPP5C. Autophosphorylation induces a conformational change that leads to remodeling of the DNA-PK complex, requisite for efficient end processing and DNA repair. Autophosphorylation in trans within DNA-PK complexes loaded on DNA ends leads to the dissociation of PRKDC from DNA and the transition into the short-range NHEJ complex. Autophosphorylation of the T2609 cluster is required for hematopoietic development and protein synthesis in erythrocytes precursors. Post-translationally, S-nitrosylated by GAPDH. Polyubiquitinated by RNF144A, leading to proteasomal degradation.

Its subcellular location is the nucleus. The protein localises to the nucleolus. It localises to the cytoplasm. It is found in the cytosol. The catalysed reaction is L-seryl-[protein] + ATP = O-phospho-L-seryl-[protein] + ADP + H(+). It carries out the reaction L-threonyl-[protein] + ATP = O-phospho-L-threonyl-[protein] + ADP + H(+). Its activity is regulated as follows. Activity seems to be attenuated by autophosphorylation. Binding to the SL1 region of U3 small nucleolar RNA promotes auto-phosphorylation activity. Inhibited by wortmannin. Serine/threonine-protein kinase that acts as a molecular sensor for DNA damage. Involved in DNA non-homologous end joining (NHEJ) required for double-strand break (DSB) repair and V(D)J recombination. Must be bound to DNA to express its catalytic properties. Promotes processing of hairpin DNA structures in V(D)J recombination by activation of the hairpin endonuclease artemis (DCLRE1C). Recruited by XRCC5 and XRCC6 to DNA ends and is required to (1) protect and align broken ends of DNA, thereby preventing their degradation, (2) and sequester the DSB for repair by NHEJ. Acts as a scaffold protein to aid the localization of DNA repair proteins to the site of damage. The assembly of the DNA-PK complex at DNA ends is also required for the NHEJ ligation step. Found at the ends of chromosomes, suggesting a further role in the maintenance of telomeric stability and the prevention of chromosomal end fusion. Also involved in modulation of transcription. As part of the DNA-PK complex, involved in the early steps of ribosome assembly by promoting the processing of precursor rRNA into mature 18S rRNA in the small-subunit processome. Binding to U3 small nucleolar RNA, recruits PRKDC and XRCC5/Ku86 to the small-subunit processome. Recognizes the substrate consensus sequence [ST]-Q. Phosphorylates 'Ser-139' of histone variant H2AX, thereby regulating DNA damage response mechanism. Phosphorylates ASF1A, DCLRE1C, c-Abl/ABL1, histone H1, HSPCA, c-jun/JUN, p53/TP53, PARP1, POU2F1, DHX9, FH, SRF, NHEJ1/XLF, XRCC1, XRCC4, XRCC5, XRCC6, WRN, MYC and RFA2. Can phosphorylate C1D not only in the presence of linear DNA but also in the presence of supercoiled DNA. Ability to phosphorylate p53/TP53 in the presence of supercoiled DNA is dependent on C1D. Acts as a regulator of the phosphatidylinositol 3-kinase/protein kinase B signal transduction by mediating phosphorylation of 'Ser-473' of protein kinase B (PKB/AKT1, PKB/AKT2, PKB/AKT3), promoting their activation. Contributes to the determination of the circadian period length by antagonizing phosphorylation of CRY1 'Ser-588' and increasing CRY1 protein stability, most likely through an indirect mechanism. Plays a role in the regulation of DNA virus-mediated innate immune response by assembling into the HDP-RNP complex, a complex that serves as a platform for IRF3 phosphorylation and subsequent innate immune response activation through the cGAS-STING pathway. Also regulates the cGAS-STING pathway by catalyzing phosphorylation of CGAS, thereby impairing CGAS oligomerization and activation. Also regulates the cGAS-STING pathway by mediating phosphorylation of PARP1. This is DNA-dependent protein kinase catalytic subunit (PRKDC) from Homo sapiens (Human).